A 235-amino-acid chain; its full sequence is Hydroxyacylglutathione hydrolase (235 aa).

Residues H53, H55, D57, H58, H109, D127, and H165 each contribute to the Zn(2+) site.

This sequence belongs to the metallo-beta-lactamase superfamily. Glyoxalase II family. As to quaternary structure, monomer. Requires Zn(2+) as cofactor.

The catalysed reaction is an S-(2-hydroxyacyl)glutathione + H2O = a 2-hydroxy carboxylate + glutathione + H(+). It functions in the pathway secondary metabolite metabolism; methylglyoxal degradation; (R)-lactate from methylglyoxal: step 2/2. Thiolesterase that catalyzes the hydrolysis of S-D-lactoyl-glutathione to form glutathione and D-lactic acid. This chain is Hydroxyacylglutathione hydrolase, found in Actinobacillus pleuropneumoniae serotype 7 (strain AP76).